The chain runs to 365 residues: Serine/threonine-protein kinase SAPK6 (365 aa).

One can recognise a Protein kinase domain in the interval 4–260 (YELLKDIGSG…IREIRNHPWF (257 aa)). ATP contacts are provided by residues 10-18 (IGSGNFGVA) and Lys33. Asp123 (proton acceptor) is an active-site residue. The tract at residues 298–365 (VQEAKTPPPS…AHASCDLQKS (68 aa)) is disordered. Positions 317–347 (TEEEEQEDGKNPDDDEGDRDEEEGEEGDSED) are enriched in acidic residues.

The protein belongs to the protein kinase superfamily. Ser/Thr protein kinase family. As to quaternary structure, interacts with BZIP46. May be phosphorylated. In terms of tissue distribution, expressed in leaf blades and leaf sheaths. Expressed in shoots and roots of young seedlings.

It catalyses the reaction L-seryl-[protein] + ATP = O-phospho-L-seryl-[protein] + ADP + H(+). The enzyme catalyses L-threonyl-[protein] + ATP = O-phospho-L-threonyl-[protein] + ADP + H(+). Activated by hyperosmotic stress. Functionally, may play a role in signal transduction of hyperosmotic response. Can phosphorylate ABI5 in vitro. Can phosphorylate BZIP46 in vitro. In Oryza sativa subsp. japonica (Rice), this protein is Serine/threonine-protein kinase SAPK6.